We begin with the raw amino-acid sequence, 175 residues long: Ribosome maturation factor RimM (175 aa).

In terms of domain architecture, PRC barrel spans 95-175; that stretch reads SEDEFYWREL…RIEVDWDPGF (81 aa).

This sequence belongs to the RimM family. Binds ribosomal protein uS19.

Its subcellular location is the cytoplasm. Its function is as follows. An accessory protein needed during the final step in the assembly of 30S ribosomal subunit, possibly for assembly of the head region. Essential for efficient processing of 16S rRNA. May be needed both before and after RbfA during the maturation of 16S rRNA. It has affinity for free ribosomal 30S subunits but not for 70S ribosomes. This is Ribosome maturation factor RimM from Aliivibrio fischeri (strain MJ11) (Vibrio fischeri).